A 151-amino-acid polypeptide reads, in one-letter code: Deoxyuridine 5'-triphosphate nucleotidohydrolase (151 aa).

Substrate contacts are provided by residues 70 to 72 (RSG), N83, 87 to 89 (LID), and M97.

This sequence belongs to the dUTPase family. Mg(2+) is required as a cofactor.

It carries out the reaction dUTP + H2O = dUMP + diphosphate + H(+). It participates in pyrimidine metabolism; dUMP biosynthesis; dUMP from dCTP (dUTP route): step 2/2. Its function is as follows. This enzyme is involved in nucleotide metabolism: it produces dUMP, the immediate precursor of thymidine nucleotides and it decreases the intracellular concentration of dUTP so that uracil cannot be incorporated into DNA. The polypeptide is Deoxyuridine 5'-triphosphate nucleotidohydrolase (Pseudomonas fluorescens (strain SBW25)).